Here is a 556-residue protein sequence, read N- to C-terminus: PTS system fructose-specific EIIB'BC component (556 aa).

2 consecutive PTS EIIB type-2 domains span residues 1–85 (MKLF…LANG) and 106–201 (IVAV…KAFK). The Phosphocysteine intermediate; for EIIB activity role is filled by C112. C112 is modified (phosphocysteine; by EIIA). The 333-residue stretch at 224–556 (VYKHLMTGVS…AIIKSKNNAE (333 aa)) folds into the PTS EIIC type-2 domain. Helical transmembrane passes span 237–257 (PLVVAGGLLIAISFMFSFNVI), 275–295 (SGVAFKLMIAVFAGYVAFSIA), 302–322 (VGLIAGMLASEAGAGILGGII), 324–344 (GFLAGYVVKGLNVIIRLPASL), 349–369 (PILILPLLGSMIVGLTMIYLI), 390–410 (VNAIVLGAIIGAMMCIDMGGP), 431–451 (MAAAMAAGMVPPIGMTVATWI), 468–488 (FVLGLCFISEGALPFVAADPI), 490–510 (VIISSVIGGAVAGAISMGLNI), and 529–549 (LKYLGAIAIGALSTGVVYAII).

The protein resides in the cell inner membrane. It catalyses the reaction D-fructose(out) + N(pros)-phospho-L-histidyl-[protein] = D-fructose 1-phosphate(in) + L-histidyl-[protein]. Functionally, the phosphoenolpyruvate-dependent sugar phosphotransferase system (sugar PTS), a major carbohydrate active transport system, catalyzes the phosphorylation of incoming sugar substrates concomitantly with their translocation across the cell membrane. The enzyme II FruAB PTS system is involved in fructose transport. This chain is PTS system fructose-specific EIIB'BC component, found in Haemophilus influenzae (strain ATCC 51907 / DSM 11121 / KW20 / Rd).